We begin with the raw amino-acid sequence, 193 residues long: MSLQTLSTPTAEPVEEPRPVEAPWQVSDRIGTALLRAPQLGDAAEIWRIAKDSRVLDTNSSYAYLLWCRDFPGTTVVAEVDGRAVGFVIGYLRPESPDTVFVWQVAVSPTERGRGTGTALIQKLLDRVAPHGVTALETTISPDNPASIAMFAAVARRRGAQLTKQPLFDAGVFPDEHAPEDLYRIAPIAQEIR.

Residues 1–22 (MSLQTLSTPTAEPVEEPRPVEA) are disordered. The N-acetyltransferase domain maps to 33–185 (ALLRAPQLGD…EHAPEDLYRI (153 aa)).

This sequence belongs to the acetyltransferase family. EctA subfamily.

The enzyme catalyses L-2,4-diaminobutanoate + acetyl-CoA = (2S)-4-acetamido-2-aminobutanoate + CoA + H(+). It functions in the pathway amine and polyamine biosynthesis; ectoine biosynthesis; L-ectoine from L-aspartate 4-semialdehyde: step 2/3. Its function is as follows. Catalyzes the acetylation of L-2,4-diaminobutyrate (DABA) to gamma-N-acetyl-alpha,gamma-diaminobutyric acid (ADABA) with acetyl coenzyme A. The protein is L-2,4-diaminobutyric acid acetyltransferase (ectA) of Nocardia farcinica (strain IFM 10152).